The following is a 703-amino-acid chain: uncharacterized protein (703 aa).

4 consecutive transmembrane segments (helical) span residues 23 to 43 (IAMSGAISAGAYSAGVFDFLI), 69 to 89 (ALSGASAGAITAAIGVIAAGG), 143 to 163 (PVISVLNANVLTAIGAEALEA), and 250 to 270 (PPEWLAFANAALASGAFPIGL). The 313-residue stretch at 23 to 335 (IAMSGAISAG…INNDPFEFVR (313 aa)) folds into the PNPLA domain. The short motif at 72–76 (GASAG) is the GXSXG element. Residue Ser-74 is the Nucleophile of the active site. Asp-322 serves as the catalytic Proton acceptor. The DGA/G motif lies at 322–324 (DGG). 3 helical membrane-spanning segments follow: residues 357–377 (VIMIAPFPEGPPFLGDGEPPL), 432–452 (ETFSIASGLLGGFGGFVLEAF), and 644–664 (ILSTLAGAAGANCQVWLAPWT).

The protein resides in the cell membrane. This is an uncharacterized protein from Sinorhizobium fredii (strain NBRC 101917 / NGR234).